Reading from the N-terminus, the 711-residue chain is Exotoxin translocation ATP-binding protein PaxB (711 aa).

A Peptidase C39 domain is found at 1–129 (MEPLMSFKQK…QVFQGNVILL (129 aa)). 5 helical membrane-spanning segments follow: residues 157–177 (IFVE…ITPL), 195–215 (LNVI…LSGL), 273–293 (ALTS…MWYY), 299–319 (IVIL…SPIL), and 392–412 (VMII…LSIG). The ABC transmembrane type-1 domain occupies 158 to 440 (FVEVMIVSIF…LAQLWQDFQQ (283 aa)). Positions 472–707 (VTFKNIRFRY…KDGLYYYLNQ (236 aa)) constitute an ABC transporter domain. 506-513 (GRSGSGKS) contacts ATP.

Belongs to the ABC transporter superfamily. Protein-1 exporter (TC 3.A.1.109) family. Homodimer.

The protein localises to the cell inner membrane. It catalyses the reaction ATP + H2O + proteinSide 1 = ADP + phosphate + proteinSide 2.. In terms of biological role, part of the ABC transporter complex PaxBD involved in PaxA export. Transmembrane domains (TMD) form a pore in the inner membrane and the ATP-binding domain (NBD) is responsible for energy generation. In Pasteurella aerogenes, this protein is Exotoxin translocation ATP-binding protein PaxB (paxB).